Here is a 430-residue protein sequence, read N- to C-terminus: MAASHSPFTRFVHGESFAGLLLVGTALIAFIWANSPWRETYFAAQHTHLALSLGDARLDLSLEHWVNDGLMAVFFLLVGLEIKRELLIGELSSRRRVALAVTAALGGMLVPAALYTALNVGGPGLSGWGVPMSTDIAFALGVLALLGSRVPLGLKVFLTALAIVDDLGAVLVIALFYTSGLNLTFLTLAALTWGAALYAGWRGAFSLKLYGVLGVLLWFFVLKSGLHATIAGVLLAFAVPIRRPDPADYLASLAEAAKPGRGEVVGARLRDLEDLLERAQSPLHRLEHALHPFVTFLVLPVFALTNAGVPVAAGGFGSVSLGVLLGLLLGKPLGVVGGAWLAVRMGMASLPRRVNWGHMVGSGLLAGIGFTMSLFVSNLAFDDSVLLTQAKLGVLLASVLAALLGAGWLLLGIRGQAPSGRDDVQVDLPR.

The next 10 helical transmembrane spans lie at 11-31, 60-80, 97-117, 127-147, 181-201, 215-235, 288-308, 309-329, 356-376, and 393-413; these read FVHGESFAGLLLVGTALIAFI, LSLEHWVNDGLMAVFFLLVGL, VALAVTAALGGMLVPAALYTA, GWGVPMSTDIAFALGVLALLG, LNLTFLTLAALTWGAALYAGW, VLLWFFVLKSGLHATIAGVLL, HALHPFVTFLVLPVFALTNAG, VPVAAGGFGSVSLGVLLGLLL, WGHMVGSGLLAGIGFTMSLFV, and GVLLASVLAALLGAGWLLLGI.

Belongs to the NhaA Na(+)/H(+) (TC 2.A.33) antiporter family.

It is found in the cell membrane. The catalysed reaction is Na(+)(in) + 2 H(+)(out) = Na(+)(out) + 2 H(+)(in). Functionally, na(+)/H(+) antiporter that extrudes sodium in exchange for external protons. The protein is Na(+)/H(+) antiporter NhaA 2 of Deinococcus geothermalis (strain DSM 11300 / CIP 105573 / AG-3a).